Here is a 305-residue protein sequence, read N- to C-terminus: Oxygen-dependent coproporphyrinogen-III oxidase (305 aa).

Ser-98 contributes to the substrate binding site. The a divalent metal cation site is built by His-102 and His-112. Catalysis depends on His-112, which acts as the Proton donor. 114–116 (NVR) lines the substrate pocket. Residues His-151 and His-181 each coordinate a divalent metal cation. An important for dimerization region spans residues 246 to 281 (YVEFNLVYDRGTLFGLQSGGRTESILMSMPPLARWE). 264–266 (GGR) is a binding site for substrate.

This sequence belongs to the aerobic coproporphyrinogen-III oxidase family. In terms of assembly, homodimer. The cofactor is a divalent metal cation.

It localises to the cytoplasm. It catalyses the reaction coproporphyrinogen III + O2 + 2 H(+) = protoporphyrinogen IX + 2 CO2 + 2 H2O. It functions in the pathway porphyrin-containing compound metabolism; protoporphyrin-IX biosynthesis; protoporphyrinogen-IX from coproporphyrinogen-III (O2 route): step 1/1. Its function is as follows. Involved in the heme biosynthesis. Catalyzes the aerobic oxidative decarboxylation of propionate groups of rings A and B of coproporphyrinogen-III to yield the vinyl groups in protoporphyrinogen-IX. In Vibrio parahaemolyticus serotype O3:K6 (strain RIMD 2210633), this protein is Oxygen-dependent coproporphyrinogen-III oxidase.